The following is a 739-amino-acid chain: tRNA 5-methylaminomethyl-2-thiouridine biosynthesis bifunctional protein MnmC (739 aa).

A tRNA (mnm(5)s(2)U34)-methyltransferase region spans residues 1–282 (MDKVTPAKLS…KREMLTATKL (282 aa)). The tract at residues 330–739 (IGAGVCGLMA…HRSSLKKPLS (410 aa)) is FAD-dependent cmnm(5)s(2)U34 oxidoreductase.

This sequence in the N-terminal section; belongs to the methyltransferase superfamily. tRNA (mnm(5)s(2)U34)-methyltransferase family. In the C-terminal section; belongs to the DAO family. It depends on FAD as a cofactor.

The protein localises to the cytoplasm. The catalysed reaction is 5-aminomethyl-2-thiouridine(34) in tRNA + S-adenosyl-L-methionine = 5-methylaminomethyl-2-thiouridine(34) in tRNA + S-adenosyl-L-homocysteine + H(+). Its function is as follows. Catalyzes the last two steps in the biosynthesis of 5-methylaminomethyl-2-thiouridine (mnm(5)s(2)U) at the wobble position (U34) in tRNA. Catalyzes the FAD-dependent demodification of cmnm(5)s(2)U34 to nm(5)s(2)U34, followed by the transfer of a methyl group from S-adenosyl-L-methionine to nm(5)s(2)U34, to form mnm(5)s(2)U34. This is tRNA 5-methylaminomethyl-2-thiouridine biosynthesis bifunctional protein MnmC from Psychrobacter sp. (strain PRwf-1).